Consider the following 525-residue polypeptide: D-3-phosphoglycerate dehydrogenase (525 aa).

NAD(+)-binding positions include 148–149 (RI), Asp-168, Thr-200, 227–229 (CAR), and Asp-253. Arg-229 is a catalytic residue. The active site involves Glu-258. The active-site Proton donor is His-276. 276 to 279 (HLGA) provides a ligand contact to NAD(+). One can recognise an ACT domain in the interval 452–524 (LVYIQHQDTT…DIVSVKLIDL (73 aa)).

It belongs to the D-isomer specific 2-hydroxyacid dehydrogenase family.

The catalysed reaction is (2R)-3-phosphoglycerate + NAD(+) = 3-phosphooxypyruvate + NADH + H(+). It catalyses the reaction (R)-2-hydroxyglutarate + NAD(+) = 2-oxoglutarate + NADH + H(+). It functions in the pathway amino-acid biosynthesis; L-serine biosynthesis; L-serine from 3-phospho-D-glycerate: step 1/3. Its activity is regulated as follows. In bacteria displays feedback inhibition by L-serine. In terms of biological role, catalyzes the reversible oxidation of 3-phospho-D-glycerate to 3-phosphonooxypyruvate, the first step of the phosphorylated L-serine biosynthesis pathway. Also catalyzes the reversible oxidation of 2-hydroxyglutarate to 2-oxoglutarate. The polypeptide is D-3-phosphoglycerate dehydrogenase (serA) (Bacillus subtilis (strain 168)).